The chain runs to 161 residues: Probable chemoreceptor glutamine deamidase CheD (161 aa).

Belongs to the CheD family.

It catalyses the reaction L-glutaminyl-[protein] + H2O = L-glutamyl-[protein] + NH4(+). In terms of biological role, probably deamidates glutamine residues to glutamate on methyl-accepting chemotaxis receptors (MCPs), playing an important role in chemotaxis. The polypeptide is Probable chemoreceptor glutamine deamidase CheD (Trichlorobacter lovleyi (strain ATCC BAA-1151 / DSM 17278 / SZ) (Geobacter lovleyi)).